Reading from the N-terminus, the 378-residue chain is MSHLDNGFRSLTLQRFPATDDVNPLQAWEAADEYLLQQLDDTEIRGPVLILNDAFGALSCALAEHKPYSIGDSYISELATRENLRLNGIDESSVKFLDSTADYPQQPGVVLIKVPKTLALLEQQLRALRKVVTSDTRIIAGAKARDIHTSTLELFEKVLGPTTTTLAWKKARLINCTFNEPQLADAPQTVSWKLEGTDWTIHNHANVFSRTGLDIGARFFMQHLPENLEGEIVDLGCGNGVIGLTLLDKNPQAKVVFVDESPMAVASSRLNVETNMPEALDRCEFMINNALSGVEPFRFNAVLCNPPFHQQHALTDNVAWEMFHHARRCLKINGELYIVANRHLDYFHKLKKIFGNCTTIATNNKFVVLKAVKLGRRR.

It belongs to the methyltransferase superfamily. RlmG family.

Its subcellular location is the cytoplasm. It carries out the reaction guanosine(1835) in 23S rRNA + S-adenosyl-L-methionine = N(2)-methylguanosine(1835) in 23S rRNA + S-adenosyl-L-homocysteine + H(+). Specifically methylates the guanine in position 1835 (m2G1835) of 23S rRNA. This chain is Ribosomal RNA large subunit methyltransferase G, found in Escherichia coli (strain ATCC 8739 / DSM 1576 / NBRC 3972 / NCIMB 8545 / WDCM 00012 / Crooks).